The sequence spans 622 residues: Palmitoyltransferase ZDHHC13 (622 aa).

The residue at position 1 (Met1) is an N-acetylmethionine. Over 1-291 the chain is Cytoplasmic; the sequence is MEGPGLGSQC…RLWRWLQKCE (291 aa). ANK repeat units follow at residues 43 to 78, 81 to 110, 115 to 144, 148 to 177, 181 to 211, 216 to 245, and 249 to 277; these read PLIE…VRQP, ENVS…VVDQ, LNST…DPTL, EGFS…SVNM, NGQT…SLNV, HQNT…SLDI, and KGET…KMRA. Residues 292–312 traverse the membrane as a helical segment; sequence LFLLLMLSVITMWAVGYILDF. The Lumenal segment spans residues 313–320; that stretch reads NSDSWLLK. A helical transmembrane segment spans residues 321–341; it reads GCLLVTLFFLTSLFPRFLVGY. Topologically, residues 342 to 347 are cytoplasmic; it reads KNLVYL. Residues 348 to 368 traverse the membrane as a helical segment; the sequence is PTAFLLSSVFWIFMTWFILFF. At 369-370 the chain is on the lumenal side; sequence PD. Residues 371-391 traverse the membrane as a helical segment; it reads LAGAPFYFSFIFSIVAFLYFF. The Cytoplasmic portion of the chain corresponds to 392–470; the sequence is YKTWATDPGF…RCIGFGNHHY (79 aa). The 51-residue stretch at 426-476 folds into the DHHC domain; that stretch reads TFCTSCLIRKPLRSLHCHVCNSCVARYDQHCLWTGRCIGFGNHHYYIFFLF. Residue Cys456 is the S-palmitoyl cysteine intermediate of the active site. The chain crosses the membrane as a helical span at residues 471 to 491; that stretch reads YIFFLFFLSMVCGWIIYGSFI. At 492–518 the chain is on the lumenal side; that stretch reads YWSSHCATTFKEDGLWTYLNQIVACSP. A helical membrane pass occupies residues 519-539; sequence WVLYILMLATFHFSWSTFLLL. Topologically, residues 540–622 are cytoplasmic; it reads NQLFQIAFLG…PAREKVLRSV (83 aa).

Belongs to the DHHC palmitoyltransferase family. AKR/ZDHHC17 subfamily. Interacts (via ANK repeats) with CLIP3. Interacts (via ANK repeats) with DNAJC5 (via C-terminus). Interacts (via ANK repeats) with HTT. Interacts (via ANK repeats) with MAP6. Interacts (via ANK repeats) with SNAP23. Interacts (via ANK repeats) with SNAP25. May interact (via ANK repeats) with SPRED2.

It is found in the golgi apparatus membrane. It localises to the cytoplasmic vesicle membrane. It carries out the reaction L-cysteinyl-[protein] + hexadecanoyl-CoA = S-hexadecanoyl-L-cysteinyl-[protein] + CoA. Palmitoyltransferase that could catalyze the addition of palmitate onto various protein substrates. Palmitoyltransferase for HTT and GAD2. May play a role in Mg(2+) transport. This chain is Palmitoyltransferase ZDHHC13, found in Pongo abelii (Sumatran orangutan).